A 1029-amino-acid chain; its full sequence is Endosome/lysosome-associated apoptosis and autophagy regulator family member 2 (1029 aa).

The first 47 residues, 1-47 (MLFRARGPVRGRGWGRPAEAPRRGRSPPWSPAWICCWALAGCQAAWA), serve as a signal peptide directing secretion. Residues 48 to 929 (GDLPSSSSRP…TCETVDFWLK (882 aa)) lie on the Extracellular side of the membrane. Asn-169 carries N-linked (GlcNAc...) asparagine glycosylation. Disulfide bonds link Cys-293/Cys-310, Cys-323/Cys-346, and Cys-326/Cys-358. Asn-405 and Asn-691 each carry an N-linked (GlcNAc...) asparagine glycan. Residues 672–877 (SDCFFYHEKE…LWESAEACPL (206 aa)) enclose the MRH domain. Cystine bridges form between Cys-674-Cys-720, Cys-730-Cys-758, Cys-827-Cys-863, and Cys-839-Cys-875. A helical transmembrane segment spans residues 930 to 950 (VGAGVGAFTAVLLVALTCYFW). The Cytoplasmic portion of the chain corresponds to 951–1029 (KKNQKLEYKY…QLKTSRSPNI (79 aa)). A Phosphoserine modification is found at Ser-1018.

Belongs to the ELAPOR family.

It localises to the cell membrane. Functions as a regulator of the BMP signaling pathway and may be involved in epidermal differentiation. The protein is Endosome/lysosome-associated apoptosis and autophagy regulator family member 2 of Homo sapiens (Human).